The sequence spans 219 residues: Uracil-DNA glycosylase (219 aa).

Aspartate 61 serves as the catalytic Proton acceptor.

Belongs to the uracil-DNA glycosylase (UDG) superfamily. UNG family.

Its subcellular location is the cytoplasm. It carries out the reaction Hydrolyzes single-stranded DNA or mismatched double-stranded DNA and polynucleotides, releasing free uracil.. Excises uracil residues from the DNA which can arise as a result of misincorporation of dUMP residues by DNA polymerase or due to deamination of cytosine. The sequence is that of Uracil-DNA glycosylase from Haemophilus influenzae (strain 86-028NP).